Consider the following 182-residue polypeptide: Oligoribonuclease (182 aa).

The Exonuclease domain maps to 8 to 171 (LIWLDMEMTG…ADIHESIGEL (164 aa)). Y129 is an active-site residue.

Belongs to the oligoribonuclease family.

The protein resides in the cytoplasm. Functionally, 3'-to-5' exoribonuclease specific for small oligoribonucleotides. The chain is Oligoribonuclease from Azoarcus sp. (strain BH72).